The following is a 402-amino-acid chain: Type II NADH:quinone oxidoreductase (402 aa).

FAD is bound by residues 12-16 (GAGYA), 39-40 (NK), and Val83. Glu172 is an active-site residue. FAD is bound by residues Asp302, 319–320 (AQ), and Lys379.

This sequence belongs to the NADH dehydrogenase family. Requires FAD as cofactor.

The protein resides in the cell membrane. The enzyme catalyses a quinone + NADH + H(+) = a quinol + NAD(+). In terms of biological role, alternative, nonproton pumping NADH:quinone oxidoreductase that delivers electrons to the respiratory chain by oxidation of NADH and reduction of quinones, and contributes to the regeneration of NAD(+). This is Type II NADH:quinone oxidoreductase from Staphylococcus saprophyticus subsp. saprophyticus (strain ATCC 15305 / DSM 20229 / NCIMB 8711 / NCTC 7292 / S-41).